A 1573-amino-acid chain; its full sequence is Pentafunctional AROM polypeptide (1573 aa).

Residues 1-384 (MSNESNIITV…YEKHATVVSD (384 aa)) are 3-dehydroquinate synthase. Residues 46–48 (DSN), 83–86 (ESSK), 114–116 (GGV), and Asp-119 contribute to the NAD(+) site. Arg-130 contacts 7-phospho-2-dehydro-3-deoxy-D-arabino-heptonate. 139–140 (TT) is a binding site for NAD(+). Asp-146 and Lys-152 together coordinate 7-phospho-2-dehydro-3-deoxy-D-arabino-heptonate. Lys-161 serves as a coordination point for NAD(+). Asn-162 serves as a coordination point for 7-phospho-2-dehydro-3-deoxy-D-arabino-heptonate. Residues 179–182 (FLHT) and Asn-190 contribute to the NAD(+) site. Residue Glu-194 coordinates Zn(2+). Residues 194–197 (EIIK) and Lys-250 contribute to the 7-phospho-2-dehydro-3-deoxy-D-arabino-heptonate site. Residue Glu-260 is the Proton acceptor; for 3-dehydroquinate synthase activity of the active site. 7-phospho-2-dehydro-3-deoxy-D-arabino-heptonate contacts are provided by residues 264–268 (RNLLN) and His-271. Zn(2+) is bound at residue His-271. His-275 serves as the catalytic Proton acceptor; for 3-dehydroquinate synthase activity. 7-phospho-2-dehydro-3-deoxy-D-arabino-heptonate contacts are provided by His-287 and Lys-356. His-287 is a Zn(2+) binding site. Residues 397–843 (VDEFTKSSWD…WDVLHQSFGV (447 aa)) form an EPSP synthase region. Cys-825 (for EPSP synthase activity) is an active-site residue. The shikimate kinase stretch occupies residues 863-1058 (NASIILIGMR…KTKKRSTFLT (196 aa)). 870-877 (GMRGAGKT) contacts ATP. Residues 1059–1280 (LNYPRIEDAL…AAPGQLTVKQ (222 aa)) are 3-dehydroquinase. The active-site Proton acceptor; for 3-dehydroquinate dehydratase activity is the His-1182. Catalysis depends on Lys-1211, which acts as the Schiff-base intermediate with substrate; for 3-dehydroquinate dehydratase activity. The segment at 1293 to 1573 (PEKFFLFGKP…FDAVYQKVIE (281 aa)) is shikimate dehydrogenase.

In the N-terminal section; belongs to the sugar phosphate cyclases superfamily. Dehydroquinate synthase family. The protein in the 2nd section; belongs to the EPSP synthase family. This sequence in the 3rd section; belongs to the shikimate kinase family. It in the 4th section; belongs to the type-I 3-dehydroquinase family. In the C-terminal section; belongs to the shikimate dehydrogenase family. As to quaternary structure, homodimer. The cofactor is Zn(2+).

It is found in the cytoplasm. The enzyme catalyses 7-phospho-2-dehydro-3-deoxy-D-arabino-heptonate = 3-dehydroquinate + phosphate. It carries out the reaction 3-dehydroquinate = 3-dehydroshikimate + H2O. It catalyses the reaction shikimate + NADP(+) = 3-dehydroshikimate + NADPH + H(+). The catalysed reaction is shikimate + ATP = 3-phosphoshikimate + ADP + H(+). The enzyme catalyses 3-phosphoshikimate + phosphoenolpyruvate = 5-O-(1-carboxyvinyl)-3-phosphoshikimate + phosphate. Its pathway is metabolic intermediate biosynthesis; chorismate biosynthesis; chorismate from D-erythrose 4-phosphate and phosphoenolpyruvate: step 2/7. It functions in the pathway metabolic intermediate biosynthesis; chorismate biosynthesis; chorismate from D-erythrose 4-phosphate and phosphoenolpyruvate: step 3/7. The protein operates within metabolic intermediate biosynthesis; chorismate biosynthesis; chorismate from D-erythrose 4-phosphate and phosphoenolpyruvate: step 4/7. It participates in metabolic intermediate biosynthesis; chorismate biosynthesis; chorismate from D-erythrose 4-phosphate and phosphoenolpyruvate: step 5/7. Its pathway is metabolic intermediate biosynthesis; chorismate biosynthesis; chorismate from D-erythrose 4-phosphate and phosphoenolpyruvate: step 6/7. Functionally, the AROM polypeptide catalyzes 5 consecutive enzymatic reactions in prechorismate polyaromatic amino acid biosynthesis. The protein is Pentafunctional AROM polypeptide of Schizosaccharomyces pombe (strain 972 / ATCC 24843) (Fission yeast).